The chain runs to 188 residues: Peptidyl-tRNA hydrolase (188 aa).

Phe15 provides a ligand contact to tRNA. Residue His20 is the Proton acceptor of the active site. TRNA contacts are provided by Tyr64, Asn66, and Asn112.

This sequence belongs to the PTH family. In terms of assembly, monomer.

It is found in the cytoplasm. It carries out the reaction an N-acyl-L-alpha-aminoacyl-tRNA + H2O = an N-acyl-L-amino acid + a tRNA + H(+). Hydrolyzes ribosome-free peptidyl-tRNAs (with 1 or more amino acids incorporated), which drop off the ribosome during protein synthesis, or as a result of ribosome stalling. Its function is as follows. Catalyzes the release of premature peptidyl moieties from peptidyl-tRNA molecules trapped in stalled 50S ribosomal subunits, and thus maintains levels of free tRNAs and 50S ribosomes. This Borreliella burgdorferi (strain ATCC 35210 / DSM 4680 / CIP 102532 / B31) (Borrelia burgdorferi) protein is Peptidyl-tRNA hydrolase.